A 379-amino-acid polypeptide reads, in one-letter code: F420-dependent formate dehydrogenase subunit beta (379 aa).

2 4Fe-4S ferredoxin-type domains span residues 271-301 and 321-351; these read EKWK…CSLE and IRLS…YIFH. [4Fe-4S] cluster contacts are provided by C280, C283, C286, C290, C330, C333, C336, and C340.

The protein belongs to the FrhB family. Dimer of an alpha (FdhA) and a beta (FdhB) subunit. It depends on [4Fe-4S] cluster as a cofactor. FAD is required as a cofactor. Requires Zn(2+) as cofactor.

The enzyme catalyses oxidized coenzyme F420-(gamma-L-Glu)(n) + formate + 2 H(+) = reduced coenzyme F420-(gamma-L-Glu)(n) + CO2. In terms of biological role, catalyzes the oxidation of formate to carbon dioxide, with coenzyme F420 as the electron acceptor. In Methanocaldococcus jannaschii (strain ATCC 43067 / DSM 2661 / JAL-1 / JCM 10045 / NBRC 100440) (Methanococcus jannaschii), this protein is F420-dependent formate dehydrogenase subunit beta (fdhB).